The sequence spans 385 residues: Phosphorylated adapter RNA export protein (385 aa).

Residues 1–18 show a composition bias toward acidic residues; it reads MALEAGDMEEGQLSDSDS. Positions 1–28 are disordered; sequence MALEAGDMEEGQLSDSDSDMTVVPSDRP. Ala2 is subject to N-acetylalanine. The interval 2–320 is necessary for interaction with CBP80; the sequence is ALEAGDMEEG…KAARKRRTQL (319 aa). 6 positions are modified to phosphoserine: Ser14, Ser16, Ser56, Ser57, Ser60, and Ser63. Positions 71–74 match the Nuclear localization signal motif; it reads KRKR. The interval 75–101 is disordered; it reads QKCHNTPPKPEPFPFGPSGQKTALNGG. The short motif at 120–129 is the Nuclear export signal element; it reads VATELGILGM. Residues 164–184 show a composition bias toward basic and acidic residues; it reads KDLDEYMHGDKKPGSKEDENG. Positions 164–192 are disordered; the sequence is KDLDEYMHGDKKPGSKEDENGQGHLKRKR. Positions 189–192 match the Nuclear localization signal motif; it reads KRKR. The interval 219 to 319 is sufficient for poly U RNA-binding; that stretch reads EKVADEIAFR…KKAARKRRTQ (101 aa). The interval 270–278 is necessary for poly U RNA-binding and snRNA export; sequence GSRRRTPGG. Thr287 carries the post-translational modification Phosphothreonine. Residues 335-385 are disordered; that stretch reads QEDDDTSRETFASDTNEALASLDEAQEGPGETKLDAEEAIEVDHPQDLDIF. Residues 343–352 are compositionally biased toward polar residues; sequence ETFASDTNEA. A Phosphoserine modification is found at Ser347. Positions 364–385 are enriched in basic and acidic residues; it reads GETKLDAEEAIEVDHPQDLDIF.

This sequence belongs to the PHAX family. In terms of assembly, found in a U snRNA export complex with PHAX/RNUXA, NCBP1/CBP80, NCBP2/CBP20, RAN, XPO1 and m7G-capped RNA. Part of a precomplex with PHAX/RNUXA, NCBP1/CBP80, NCBP2/CBP20 and m7G-capped RNA. Interacts with NCBP1/CBP80. Found in a complex with snoRNA. Interacts with NCBP2/CBP20. Interacts with DDX39A; this interaction stimulates PHAX RNA binding activity. Phosphorylated in the nucleus. Dephosphorylated in the cytoplasm.

The protein localises to the nucleus. It is found in the nucleoplasm. It localises to the cajal body. The protein resides in the cytoplasm. Functionally, a phosphoprotein adapter involved in the XPO1-mediated U snRNA export from the nucleus. Bridge components required for U snRNA export, the cap binding complex (CBC)-bound snRNA on the one hand and the GTPase Ran in its active GTP-bound form together with the export receptor XPO1 on the other. Its phosphorylation in the nucleus is required for U snRNA export complex assembly and export, while its dephosphorylation in the cytoplasm causes export complex disassembly. It is recycled back to the nucleus via the importin alpha/beta heterodimeric import receptor. The directionality of nuclear export is thought to be conferred by an asymmetric distribution of the GTP- and GDP-bound forms of Ran between the cytoplasm and nucleus. Its compartmentalized phosphorylation cycle may also contribute to the directionality of export. Binds strongly to m7G-capped U1 and U5 small nuclear RNAs (snRNAs) in a sequence-unspecific manner and phosphorylation-independent manner. Also plays a role in the biogenesis of U3 small nucleolar RNA (snoRNA). Involved in the U3 snoRNA transport from nucleoplasm to Cajal bodies. Binds strongly to m7G-capped U3, U8 and U13 precursor snoRNAs and weakly to trimethylated (TMG)-capped U3, U8 and U13 snoRNAs. Also binds to telomerase RNA. The sequence is that of Phosphorylated adapter RNA export protein (Phax) from Mus musculus (Mouse).